A 171-amino-acid chain; its full sequence is Mitochondrial import inner membrane translocase subunit Tim17-A (171 aa).

An intrachain disulfide couples C9 to C78. 3 consecutive transmembrane segments (helical) span residues 17 to 37 (CGGAFTMGTIGGGIFQAFKGF), 63 to 77 (GGSFAVWGGLFSTID), and 113 to 133 (VGSAAMGGILLALIEGAGILL). A disordered region spans residues 147 to 171 (FAEDHSQLPSSQLPSSPFGDYRQYQ). The span at 153–163 (QLPSSQLPSSP) shows a compositional bias: low complexity.

This sequence belongs to the Tim17/Tim22/Tim23 family. Component of the TIM23 complex at least composed of TIMM23, TIMM17 (TIMM17A or TIMM17B) and TIMM50. The complex interacts with the TIMM44 component of the PAM complex and with DNAJC15. In terms of processing, degraded by YMEL1 downstream of the integrated stress response (ISR).

It is found in the mitochondrion inner membrane. In terms of biological role, essential component of the TIM23 complex, a complex that mediates the translocation of transit peptide-containing proteins across the mitochondrial inner membrane. This chain is Mitochondrial import inner membrane translocase subunit Tim17-A (Timm17a), found in Rattus norvegicus (Rat).